Consider the following 64-residue polypeptide: Small ribosomal subunit protein eS17 (64 aa).

This sequence belongs to the eukaryotic ribosomal protein eS17 family.

The sequence is that of Small ribosomal subunit protein eS17 from Methanosarcina mazei (strain ATCC BAA-159 / DSM 3647 / Goe1 / Go1 / JCM 11833 / OCM 88) (Methanosarcina frisia).